The primary structure comprises 166 residues: Interferon gamma (166 aa).

The N-terminal stretch at 1–23 (MNYTSYILAFQLCVILCSSGCNC) is a signal peptide. Pyrrolidone carboxylic acid is present on Gln-24. 2 N-linked (GlcNAc...) asparagine glycosylation sites follow: Asn-39 and Asn-106.

It belongs to the type II (or gamma) interferon family. In terms of assembly, homodimer. Interacts with IFNGR1 (via extracellular domain); this interaction promotes IFNGR1 dimerization. As to expression, released primarily from activated T lymphocytes.

Its subcellular location is the secreted. In terms of biological role, type II interferon produced by immune cells such as T-cells and NK cells that plays crucial roles in antimicrobial, antiviral, and antitumor responses by activating effector immune cells and enhancing antigen presentation. Primarily signals through the JAK-STAT pathway after interaction with its receptor IFNGR1 to affect gene regulation. Upon IFNG binding, IFNGR1 intracellular domain opens out to allow association of downstream signaling components JAK2, JAK1 and STAT1, leading to STAT1 activation, nuclear translocation and transcription of IFNG-regulated genes. Many of the induced genes are transcription factors such as IRF1 that are able to further drive regulation of a next wave of transcription. Plays a role in class I antigen presentation pathway by inducing a replacement of catalytic proteasome subunits with immunoproteasome subunits. In turn, increases the quantity, quality, and repertoire of peptides for class I MHC loading. Increases the efficiency of peptide generation also by inducing the expression of activator PA28 that associates with the proteasome and alters its proteolytic cleavage preference. Up-regulates as well MHC II complexes on the cell surface by promoting expression of several key molecules such as cathepsins B/CTSB, H/CTSH, and L/CTSL. Participates in the regulation of hematopoietic stem cells during development and under homeostatic conditions by affecting their development, quiescence, and differentiation. This is Interferon gamma (IFNG) from Canis lupus familiaris (Dog).